The primary structure comprises 180 residues: Decaprenylphosphoryl-5-phosphoribose phosphatase (180 aa).

The next 4 helical transmembrane spans lie at 31-51, 61-81, 116-136, and 139-159; these read ALSH…AGAL, LAVG…KRVV, VLLA…PMAL, and LVLG…GALV.

The protein belongs to the PA-phosphatase related phosphoesterase family.

Its subcellular location is the cell membrane. The enzyme catalyses trans,octa-cis-decaprenylphospho-beta-D-ribofuranose 5-phosphate + H2O = trans,octa-cis-decaprenylphospho-beta-D-ribofuranose + phosphate. It participates in cell wall biogenesis; cell wall polysaccharide biosynthesis. Phosphatase involved in the biosynthesis of decaprenylphosphoryl arabinose (DPA), which serves as the arabinose donor for the biosynthesis of arabinogalactan, the major mycobacterial cell wall polysaccharide. Catalyzes the dephosphorylation of decaprenylphosphoryl-5-phosphoribose (DPPR) to decaprenyl-phosphoribose (DPR). This is Decaprenylphosphoryl-5-phosphoribose phosphatase from Mycolicibacterium smegmatis (strain ATCC 700084 / mc(2)155) (Mycobacterium smegmatis).